The sequence spans 419 residues: Voltage-gated potassium channel subunit beta-1 (419 aa).

Positions 1–51 (MLAARTGAAGSQIAEESSKLRKQAAFSGGSKDRSPKKASENVKDSSLSPSG) are disordered. Residues 30–43 (SKDRSPKKASENVK) are compositionally biased toward basic and acidic residues. NADP(+) contacts are provided by threonine 108, tryptophan 109, glutamine 115, and aspartate 137. Tyrosine 142 functions as the Proton donor/acceptor in the catalytic mechanism. Positions 210, 240, 241, 266, 295, 296, 297, 298, 299, 300, 306, 316, 375, 377, 381, 384, and 385 each coordinate NADP(+).

The protein belongs to the shaker potassium channel beta subunit family. In terms of assembly, homotetramer. Interaction with tetrameric potassium channel alpha subunits gives rise to a heterooctamer. Identified in potassium channel complexes containing KCNA1, KCNA2, KCNA4, KCNA5, KCNA6, KCNAB1 and KCNAB2. Part of a complex containing KCNA1, KCNA4 and LGI1; interaction with LGI1 inhibits down-regulation of KCNA1 channel activity. Interacts with the dimer formed by GNB1 and GNG2; this enhances KCNA1 binding. Interacts with SQSTM1. Detected in portal vein myocytes (at protein level).

It localises to the cytoplasm. Its subcellular location is the membrane. The protein resides in the cell membrane. The catalysed reaction is a primary alcohol + NADP(+) = an aldehyde + NADPH + H(+). The enzyme catalyses a secondary alcohol + NADP(+) = a ketone + NADPH + H(+). Regulatory subunit of the voltage-gated potassium (Kv) channels composed of pore-forming and potassium-conducting alpha subunits and of regulatory beta subunits. The beta-1/KCNAB1 cytoplasmic subunit mediates closure of delayed rectifier potassium channels by physically obstructing the pore via its N-terminal domain and increases the speed of channel closure for other family members. Promotes the inactivation of KCNA1, KCNA2, KCNA4, KCNA5 and KCNA6 alpha subunit-containing channels. Displays nicotinamide adenine dinucleotide phosphate (NADPH)-dependent aldoketoreductase activity by catalyzing the NADPH-dependent reduction of a variety of endogenous aldehydes and ketones. The binding of NADPH is required for efficient down-regulation of potassium channel activity. Oxidation of the bound NADPH restrains N-terminal domain from blocking the channel, thereby decreasing N-type inactivation of potassium channel activity. The sequence is that of Voltage-gated potassium channel subunit beta-1 (KCNAB1) from Oryctolagus cuniculus (Rabbit).